The chain runs to 65 residues: Large ribosomal subunit protein bL35 (65 aa).

Belongs to the bacterial ribosomal protein bL35 family.

The chain is Large ribosomal subunit protein bL35 from Sodalis glossinidius (strain morsitans).